Reading from the N-terminus, the 316-residue chain is Protoheme IX farnesyltransferase (316 aa).

The next 9 membrane-spanning stretches (helical) occupy residues 32-52 (VMSL…GHIH), 53-73 (PVLG…SGAL), 93-113 (IPAG…LSGF), 116-136 (VILG…TIFF), 152-172 (NIVI…ACVT), 180-200 (TVLF…LALF), 221-241 (VTKH…VLPS), 252-271 (LVAA…VWRM), and 289-309 (IFYL…PVLV).

This sequence belongs to the UbiA prenyltransferase family. Protoheme IX farnesyltransferase subfamily.

The protein localises to the cell inner membrane. The catalysed reaction is heme b + (2E,6E)-farnesyl diphosphate + H2O = Fe(II)-heme o + diphosphate. Its pathway is porphyrin-containing compound metabolism; heme O biosynthesis; heme O from protoheme: step 1/1. Its function is as follows. Converts heme B (protoheme IX) to heme O by substitution of the vinyl group on carbon 2 of heme B porphyrin ring with a hydroxyethyl farnesyl side group. The polypeptide is Protoheme IX farnesyltransferase (Rhizobium johnstonii (strain DSM 114642 / LMG 32736 / 3841) (Rhizobium leguminosarum bv. viciae)).